We begin with the raw amino-acid sequence, 331 residues long: MKEYIERVTDGDDLTQAEARAVATTVFEDATEAQIGALLTALRAKGETEAEIAGFAEGMRDAARTIRPDREGLVDTCGTGGDDYNTINVSTTSAIVAAGAGVPIAKHGNYSVSSSSGSADVLEEVGVDIEAEPPDVEETIERDGIGFMLAPVFHPAMKAVIGPRQELGMRTVFNILGPLTNPADADAQVLGVYDPDLVPVMAEALARLDVERALVVHGDGLDEIAIHGETVVAEVTDDRIAEYTITPEDMGLETRDIEAISGGSPEENAADLRGIVTGDVTGAKRDIILANAGAAIYVAGVADTHEAGVEQARQAIESGAAADKLDDLIGA.

5-phospho-alpha-D-ribose 1-diphosphate contacts are provided by residues Gly78, 81–82 (GD), Thr86, 88–91 (NVST), 106–114 (KHGNYSVSS), and Ser118. Anthranilate is bound at residue Gly78. Mg(2+) is bound at residue Ser90. Asn109 is an anthranilate binding site. Anthranilate is bound at residue Arg164. Mg(2+)-binding residues include Asp222 and Glu223.

It belongs to the anthranilate phosphoribosyltransferase family. As to quaternary structure, homodimer. The cofactor is Mg(2+).

It carries out the reaction N-(5-phospho-beta-D-ribosyl)anthranilate + diphosphate = 5-phospho-alpha-D-ribose 1-diphosphate + anthranilate. It participates in amino-acid biosynthesis; L-tryptophan biosynthesis; L-tryptophan from chorismate: step 2/5. Its function is as follows. Catalyzes the transfer of the phosphoribosyl group of 5-phosphorylribose-1-pyrophosphate (PRPP) to anthranilate to yield N-(5'-phosphoribosyl)-anthranilate (PRA). In Haloarcula marismortui (strain ATCC 43049 / DSM 3752 / JCM 8966 / VKM B-1809) (Halobacterium marismortui), this protein is Anthranilate phosphoribosyltransferase.